A 304-amino-acid polypeptide reads, in one-letter code: Quinolinate synthase (304 aa).

Histidine 24 and serine 41 together coordinate iminosuccinate. Cysteine 86 lines the [4Fe-4S] cluster pocket. Iminosuccinate contacts are provided by residues 112–114 (YVN) and serine 129. [4Fe-4S] cluster is bound at residue cysteine 171. Iminosuccinate-binding positions include 197 to 199 (HPE) and threonine 214. [4Fe-4S] cluster is bound at residue cysteine 259.

It belongs to the quinolinate synthase family. Type 2 subfamily. It depends on [4Fe-4S] cluster as a cofactor.

It localises to the cytoplasm. The enzyme catalyses iminosuccinate + dihydroxyacetone phosphate = quinolinate + phosphate + 2 H2O + H(+). Its pathway is cofactor biosynthesis; NAD(+) biosynthesis; quinolinate from iminoaspartate: step 1/1. Its function is as follows. Catalyzes the condensation of iminoaspartate with dihydroxyacetone phosphate to form quinolinate. The sequence is that of Quinolinate synthase from Geobacter sp. (strain M21).